Reading from the N-terminus, the 417-residue chain is Sterile alpha motif domain-containing protein 14 (417 aa).

2 disordered regions span residues 37–299 and 388–417; these read LLAK…WQEA and AAAEKERKAQEKAARQREKLRRREQEAKKS. Basic residues predominate over residues 40-49; sequence KGRRHRPSRS. Phosphoserine occurs at positions 84 and 108. Residues 135-153 are compositionally biased toward low complexity; the sequence is AAASCSPPRSAPSSDSSPS. Over residues 160–173 the composition is skewed to basic and acidic residues; sequence RAEPHSEDDSRDAS. A phosphoserine mark is found at Ser-173 and Ser-179. 2 stretches are compositionally biased toward low complexity: residues 244-260 and 276-295; these read SGKGSASSGSTTSPTCS and STLSDDSTPPSSSPKIPSGP. The residue at position 279 (Ser-279) is a Phosphoserine. Thr-283 is modified (phosphothreonine). Positions 326-389 constitute an SAM domain; sequence WTSQQVGQWL…KRKLKEMAAA (64 aa). A coiled-coil region spans residues 377–417; the sequence is ALVKRKLKEMAAAAEKERKAQEKAARQREKLRRREQEAKKS. A compositionally biased stretch (basic and acidic residues) spans 390–417; sequence AEKERKAQEKAARQREKLRRREQEAKKS.

The protein is Sterile alpha motif domain-containing protein 14 (SAMD14) of Homo sapiens (Human).